A 590-amino-acid chain; its full sequence is Leucine-rich repeat transmembrane neuronal protein 4 (590 aa).

An N-terminal signal peptide occupies residues 1-30 (MGFRLITQLKGMSVLLVLFPTLLLVMLTGA). Positions 31–59 (QRACPKNCRCDGKIVYCESHAFADIPENI) constitute an LRRNT domain. The Extracellular segment spans residues 31–424 (QRACPKNCRC…HEYEHVSFHK (394 aa)). N-linked (GlcNAc...) asparagine glycosylation occurs at N58. LRR repeat units lie at residues 60-83 (SGGSQGLSLRFNSIQKLKSNQFAG), 84-107 (LNQLIWLYLDHNYISSVDEDAFQG), 108-131 (IRRLKELILSSNKITYLHNKTFHP), 132-155 (VPNLRNLDLSYNKLQTLQSEQFKG), 157-179 (RKLIILHLRSNSLKTVPIRVFQD), 180-203 (CRNLDFLDLGYNRLRSLSRNAFAG), 205-227 (LKLKELHLEHNQFSKINFAHFPR), 228-251 (LFNLRSIYLQWNRIRSVSQGLTWT), 252-275 (WSSLHTLDLSGNDIQAIEPGTFKC), and 276-299 (LPNLQKLNLDSNKLTNVSQETVNA). N-linked (GlcNAc...) asparagine glycosylation occurs at N126. N291 carries an N-linked (GlcNAc...) asparagine glycan. The LRRCT domain occupies 311-362 (NMWECSRSICPLFYWLKNFKGNKESTMICAGPKHIQGEKVSDAVETYNICSD). The chain crosses the membrane as a helical span at residues 425–445 (IIAGSVALFLSVAMILLVIYV). The Cytoplasmic portion of the chain corresponds to 446–590 (SWKRYPASMK…PAIYLERITN (145 aa)).

This sequence belongs to the LRRTM family. In terms of assembly, peripherally associated with AMPAR complex. AMPAR complex consists of an inner core made of 4 pore-forming GluA/GRIA proteins (GRIA1, GRIA2, GRIA3 and GRIA4) and 4 major auxiliary subunits arranged in a twofold symmetry. One of the two pairs of distinct binding sites is occupied either by CNIH2, CNIH3 or CACNG2, CACNG3. The other harbors CACNG2, CACNG3, CACNG4, CACNG8 or GSG1L. This inner core of AMPAR complex is complemented by outer core constituents binding directly to the GluA/GRIA proteins at sites distinct from the interaction sites of the inner core constituents. Outer core constituents include at least PRRT1, PRRT2, CKAMP44/SHISA9, FRRS1L and NRN1. The proteins of the inner and outer core serve as a platform for other, more peripherally associated AMPAR constituents, including LRRTM4. Alone or in combination, these auxiliary subunits control the gating and pharmacology of the AMPAR complex and profoundly impact their biogenesis and protein processing. In terms of tissue distribution, expressed in the brain (at protein level).

The protein resides in the cell membrane. Its subcellular location is the postsynaptic cell membrane. In terms of biological role, may play a role in the development and maintenance of the nervous system. Exhibits strong synaptogenic activity, restricted to excitatory presynaptic differentiation. This Rattus norvegicus (Rat) protein is Leucine-rich repeat transmembrane neuronal protein 4 (Lrrtm4).